The primary structure comprises 103 residues: MSGRGKGGKGLGKGGAKRHRKVLRDNIQGITKPAIRRLARRGGVKRISGLIYEEIRGVLKVFLENIIKDSVTYTEHARRKTVTAMDIVYSLKRQGRTLYGFGG.

Residues 1–14 (MSGRGKGGKGLGKG) show a composition bias toward gly residues. The tract at residues 1–20 (MSGRGKGGKGLGKGGAKRHR) is disordered. Residues 17 to 21 (KRHRK) mediate DNA binding.

Belongs to the histone H4 family. The nucleosome is a histone octamer containing two molecules each of H2A, H2B, H3 and H4 assembled in one H3-H4 heterotetramer and two H2A-H2B heterodimers. The octamer wraps approximately 147 bp of DNA.

The protein resides in the nucleus. It is found in the chromosome. In terms of biological role, core component of nucleosome. Nucleosomes wrap and compact DNA into chromatin, limiting DNA accessibility to the cellular machineries which require DNA as a template. Histones thereby play a central role in transcription regulation, DNA repair, DNA replication and chromosomal stability. DNA accessibility is regulated via a complex set of post-translational modifications of histones, also called histone code, and nucleosome remodeling. This chain is Histone H4, found in Eimeria tenella (Coccidian parasite).